A 182-amino-acid chain; its full sequence is uncharacterized protein (182 aa).

To M.tuberculosis Rv2313c.

This is an uncharacterized protein from Escherichia coli (strain K12).